Here is a 218-residue protein sequence, read N- to C-terminus: Dual specificity protein phosphatase TpbA (218 aa).

Residues 1–28 form the signal peptide; that stretch reads MHRSPLAWLRLLLAAVLGAFLLGGPLHA. The Tyrosine-protein phosphatase domain maps to 44–188; the sequence is DPSINLYRMS…YVRGADVDGL (145 aa). Asp-105 serves as the catalytic Proton donor/acceptor. Cys-132 (phosphocysteine intermediate) is an active-site residue.

It belongs to the protein-tyrosine phosphatase family.

The protein resides in the periplasm. The catalysed reaction is O-phospho-L-tyrosyl-[protein] + H2O = L-tyrosyl-[protein] + phosphate. The enzyme catalyses O-phospho-L-threonyl-[protein] + H2O = L-threonyl-[protein] + phosphate. It carries out the reaction O-phospho-L-seryl-[protein] + H2O = L-seryl-[protein] + phosphate. Its function is as follows. Phosphatase that regulates diverse phenotypes in P.aeruginosa via regulation of the concentration of cellular c-di-GMP. Acts by dephosphorylating the membrane-anchored diguanylate cyclase TpbB at tyrosine and serine/threonine sites, leading to inactivation of TpbB and reduced c-di-GMP production. In vitro shows phosphatase activity toward p-nitrophenyl phosphate (pNPP) and tyrosine phosphopeptides. Can efficiently dephosphorylate two phosphorylated peptides derived from the periplasmic domain of TpbB, with a strong preference for Tyr-48 over Tyr-62. The protein is Dual specificity protein phosphatase TpbA of Pseudomonas aeruginosa (strain ATCC 15692 / DSM 22644 / CIP 104116 / JCM 14847 / LMG 12228 / 1C / PRS 101 / PAO1).